The following is a 310-amino-acid chain: Carbamate kinase 1 (310 aa).

It belongs to the carbamate kinase family.

The protein localises to the cytoplasm. It carries out the reaction hydrogencarbonate + NH4(+) + ATP = carbamoyl phosphate + ADP + H2O + H(+). The protein operates within metabolic intermediate metabolism; carbamoyl phosphate degradation; CO(2) and NH(3) from carbamoyl phosphate: step 1/1. This Staphylococcus aureus (strain bovine RF122 / ET3-1) protein is Carbamate kinase 1 (arcC1).